We begin with the raw amino-acid sequence, 680 residues long: Transketolase 1 (680 aa).

Residue histidine 30 participates in substrate binding. Thiamine diphosphate contacts are provided by residues histidine 69 and 116 to 118 (GPL). Aspartate 157 provides a ligand contact to Mg(2+). Glycine 158 and asparagine 187 together coordinate thiamine diphosphate. Asparagine 187 and isoleucine 189 together coordinate Mg(2+). Substrate is bound at residue histidine 263. A thiamine diphosphate-binding site is contributed by histidine 263. Phosphoserine occurs at positions 286 and 335. The substrate site is built by arginine 359 and serine 386. Position 402 is a phosphoserine (serine 402). Thiamine diphosphate-binding residues include glutamate 418 and phenylalanine 445. Catalysis depends on glutamate 418, which acts as the Proton donor. The substrate site is built by histidine 469 and aspartate 477. Serine 492 is subject to Phosphoserine. Substrate is bound at residue arginine 528. Lysine 647 participates in a covalent cross-link: Glycyl lysine isopeptide (Lys-Gly) (interchain with G-Cter in ubiquitin).

The protein belongs to the transketolase family. As to quaternary structure, homodimer. The cofactor is Mg(2+). Ca(2+) is required as a cofactor. Mn(2+) serves as cofactor. Requires Co(2+) as cofactor. It depends on thiamine diphosphate as a cofactor.

The catalysed reaction is D-sedoheptulose 7-phosphate + D-glyceraldehyde 3-phosphate = aldehydo-D-ribose 5-phosphate + D-xylulose 5-phosphate. Functionally, catalyzes the transfer of a two-carbon ketol group from a ketose donor to an aldose acceptor, via a covalent intermediate with the cofactor thiamine pyrophosphate. This Saccharomyces cerevisiae (strain ATCC 204508 / S288c) (Baker's yeast) protein is Transketolase 1 (TKL1).